A 320-amino-acid chain; its full sequence is Acetyl-coenzyme A carboxylase carboxyl transferase subunit alpha (320 aa).

Positions 33-294 (AFDGEIESLR…GDAVEEELKA (262 aa)) constitute a CoA carboxyltransferase C-terminal domain.

Belongs to the AccA family. In terms of assembly, acetyl-CoA carboxylase is a heterohexamer composed of biotin carboxyl carrier protein (AccB), biotin carboxylase (AccC) and two subunits each of ACCase subunit alpha (AccA) and ACCase subunit beta (AccD).

The protein localises to the cytoplasm. The catalysed reaction is N(6)-carboxybiotinyl-L-lysyl-[protein] + acetyl-CoA = N(6)-biotinyl-L-lysyl-[protein] + malonyl-CoA. It functions in the pathway lipid metabolism; malonyl-CoA biosynthesis; malonyl-CoA from acetyl-CoA: step 1/1. Its function is as follows. Component of the acetyl coenzyme A carboxylase (ACC) complex. First, biotin carboxylase catalyzes the carboxylation of biotin on its carrier protein (BCCP) and then the CO(2) group is transferred by the carboxyltransferase to acetyl-CoA to form malonyl-CoA. This chain is Acetyl-coenzyme A carboxylase carboxyl transferase subunit alpha, found in Phenylobacterium zucineum (strain HLK1).